The primary structure comprises 464 residues: uncharacterized protein (464 aa).

Residues 13-71 enclose the TRAM domain; sequence MLKVSDIIQIKIDKIVFGGEGLGYYNGFAVFVPMSIPEDELEIEIISIKKTYARGLIKN. 4 residues coordinate S-adenosyl-L-methionine: Q295, Y324, E345, and D393. C420 acts as the Nucleophile in catalysis.

Belongs to the class I-like SAM-binding methyltransferase superfamily. RNA M5U methyltransferase family.

This is an uncharacterized protein from Fusobacterium nucleatum subsp. nucleatum (strain ATCC 25586 / DSM 15643 / BCRC 10681 / CIP 101130 / JCM 8532 / KCTC 2640 / LMG 13131 / VPI 4355).